Here is a 609-residue protein sequence, read N- to C-terminus: UvrABC system protein C (609 aa).

In terms of domain architecture, GIY-YIG spans 16–94 (SSAGVYRMYD…IKQYMPKYNV (79 aa)). The region spanning 203-238 (QQVISALVDKMELAAERQAYEQAARFRDQIMALRKV) is the UVR domain.

Belongs to the UvrC family. In terms of assembly, interacts with UvrB in an incision complex.

It localises to the cytoplasm. Its function is as follows. The UvrABC repair system catalyzes the recognition and processing of DNA lesions. UvrC both incises the 5' and 3' sides of the lesion. The N-terminal half is responsible for the 3' incision and the C-terminal half is responsible for the 5' incision. This is UvrABC system protein C from Shewanella baltica (strain OS155 / ATCC BAA-1091).